We begin with the raw amino-acid sequence, 152 residues long: Ribosome maturation factor RimP (152 aa).

The protein belongs to the RimP family.

The protein resides in the cytoplasm. Its function is as follows. Required for maturation of 30S ribosomal subunits. The chain is Ribosome maturation factor RimP from Francisella tularensis subsp. tularensis (strain FSC 198).